Here is a 621-residue protein sequence, read N- to C-terminus: Phosphoenolpyruvate carboxykinase [GTP] (621 aa).

Substrate is bound by residues R83 and 217-219 (YGG). Residues K226 and H245 each coordinate Mn(2+). A substrate-binding site is contributed by S267. Position 268–273 (268–273 (MCGKTS)) interacts with GTP. Residue C269 is part of the active site. D286 is a binding site for Mn(2+). Residue 381-383 (NAR) participates in substrate binding. GTP-binding residues include R383 and R415.

It belongs to the phosphoenolpyruvate carboxykinase [GTP] family. The cofactor is Mn(2+).

The protein localises to the cytoplasm. It catalyses the reaction oxaloacetate + GTP = phosphoenolpyruvate + GDP + CO2. Its pathway is carbohydrate biosynthesis; gluconeogenesis. Its function is as follows. Catalyzes the conversion of oxaloacetate (OAA) to phosphoenolpyruvate (PEP), the rate-limiting step in the metabolic pathway that produces glucose from lactate and other precursors derived from the citric acid cycle. The sequence is that of Phosphoenolpyruvate carboxykinase [GTP] from Pyrococcus horikoshii (strain ATCC 700860 / DSM 12428 / JCM 9974 / NBRC 100139 / OT-3).